Here is a 173-residue protein sequence, read N- to C-terminus: MAKFSPKVQDEGRDDGLREKMIAVNRVTKVVKGGRILGFAALTVVGDGDGRVGMGKGKSKEVPAAVQKAMEESRRNMIKVSLKHGTIHHTVMGQHGAASVMLNPAPKGTGIIAGGPMRAVFEVLGITDIVAKSHGSSNPYNMVRATFDALKHSTTPSEVAAKRGKSVEDIFTA.

The region spanning 17 to 80 (LREKMIAVNR…EESRRNMIKV (64 aa)) is the S5 DRBM domain.

Belongs to the universal ribosomal protein uS5 family. As to quaternary structure, part of the 30S ribosomal subunit. Contacts proteins S4 and S8.

With S4 and S12 plays an important role in translational accuracy. In terms of biological role, located at the back of the 30S subunit body where it stabilizes the conformation of the head with respect to the body. The polypeptide is Small ribosomal subunit protein uS5 (Delftia acidovorans (strain DSM 14801 / SPH-1)).